The following is a 339-amino-acid chain: Phenylalanine--tRNA ligase alpha subunit (339 aa).

Glu254 provides a ligand contact to Mg(2+).

Belongs to the class-II aminoacyl-tRNA synthetase family. Phe-tRNA synthetase alpha subunit type 1 subfamily. Tetramer of two alpha and two beta subunits. Mg(2+) is required as a cofactor.

It localises to the cytoplasm. The enzyme catalyses tRNA(Phe) + L-phenylalanine + ATP = L-phenylalanyl-tRNA(Phe) + AMP + diphosphate + H(+). This is Phenylalanine--tRNA ligase alpha subunit from Clostridium beijerinckii (strain ATCC 51743 / NCIMB 8052) (Clostridium acetobutylicum).